Here is a 327-residue protein sequence, read N- to C-terminus: Immediate early response gene 5 protein (327 aa).

Disordered stretches follow at residues 59 to 166 (GPAG…GVFP) and 227 to 313 (GPAG…DKPV). Positions 71 to 84 (QPGEPAAGPPAGWG) are enriched in low complexity. Acidic residues predominate over residues 253-262 (GEDDDAEEME). Residues 265–278 (NVANLISIFGSSFS) are compositionally biased toward polar residues.

Belongs to the IER family. In terms of assembly, monomer. Homodimer. Associates with the catalytic subunit of protein phosphatase PP2A. Interacts (via N- and C-terminal regions) with PPP2R2B. Interacts with PPP2R2A, PPP2R2C and PPP2R2D. Interacts (via N-terminus) with RPS6KB1. Interacts (via central region) with HSF1; this interaction promotes PPP2CA-induced HSF1 dephosphorylation, leading to enhanced HSF1 transcriptional activity. Expressed in acute myeloid leukemia (AML) cells.

The protein localises to the nucleus. It is found in the cytoplasm. Plays a role as a transcription factor. Mediates positive transcriptional regulation of several chaperone genes during the heat shock response in a HSF1-dependent manner. Mediates negative transcriptional regulation of CDC25B expression. Plays a role in the dephosphorylation of the heat shock factor HSF1 and ribosomal protein S6 kinase (S6K) by the protein phosphatase PP2A. Involved in the regulation of cell proliferation and resistance to thermal stress. Involved in the cell cycle checkpoint and survival in response to ionizing radiation. Associates with chromatin to the CDC25B promoter. This chain is Immediate early response gene 5 protein (IER5), found in Homo sapiens (Human).